A 333-amino-acid chain; its full sequence is Mitochondrial fission regulator 1 (333 aa).

S119 carries the phosphoserine modification. The segment covering 286 to 307 has biased composition (basic and acidic residues); the sequence is YRSDSQDEVEKGVPKSESEATS. A disordered region spans residues 286-315; sequence YRSDSQDEVEKGVPKSESEATSERVLFGPH.

Belongs to the MTFR1 family.

It localises to the mitochondrion. Functionally, may play a role in mitochondrial aerobic respiration. May also regulate mitochondrial organization and fission. The protein is Mitochondrial fission regulator 1 (MTFR1) of Pongo abelii (Sumatran orangutan).